The primary structure comprises 1446 residues: E3 ubiquitin-protein ligase listerin (1446 aa).

HEAT repeat units lie at residues 71–108 (QTRE…LTTD), 115–153 (MLTM…VTNG), 324–361 (SLQK…LLQK), 363–399 (ENPA…TFSD), 413–450 (EILK…WIIE), 630–669 (AENV…AEDE), 684–721 (GDFE…FCDA), 1046–1083 (LRAL…PAFQ), 1107–1144 (SVAR…KLSL), 1165–1202 (LLDL…NALN), and 1251–1289 (FKSM…RLLI). The RING-type zinc finger occupies 1395–1442 (CTICMMTVHQQTHQLPKIKCKQCKNKFHSNCLYKWFESSNQSTCPLCR).

The protein belongs to the LTN1 family. As to quaternary structure, component of the ribosome quality control complex (RQC), composed of at least the E3 ubiquitin ligase ltn1 and nemf. The complex probably also contains tcf25 as well as vcp/p97 and its ubiquitin-binding cofactors. RQC forms a stable complex with 60S ribosomal subunits.

The protein resides in the cytoplasm. It is found in the cytosol. The enzyme catalyses S-ubiquitinyl-[E2 ubiquitin-conjugating enzyme]-L-cysteine + [acceptor protein]-L-lysine = [E2 ubiquitin-conjugating enzyme]-L-cysteine + N(6)-ubiquitinyl-[acceptor protein]-L-lysine.. It functions in the pathway protein modification; protein ubiquitination. Functionally, E3 ubiquitin-protein ligase. Component of the ribosome quality control complex (RQC), a ribosome-associated complex that mediates ubiquitination and extraction of incompletely synthesized nascent chains for proteasomal degradation. Ubiquitination leads to vcp/p97 recruitment for extraction and degradation of the incomplete translation product. This Caenorhabditis elegans protein is E3 ubiquitin-protein ligase listerin.